We begin with the raw amino-acid sequence, 185 residues long: ATP-dependent protease subunit HslV (185 aa).

Thr13 is a catalytic residue. Na(+) is bound by residues Gly167, Cys170, and Thr173.

Belongs to the peptidase T1B family. HslV subfamily. In terms of assembly, a double ring-shaped homohexamer of HslV is capped on each side by a ring-shaped HslU homohexamer. The assembly of the HslU/HslV complex is dependent on binding of ATP.

It is found in the cytoplasm. It catalyses the reaction ATP-dependent cleavage of peptide bonds with broad specificity.. With respect to regulation, allosterically activated by HslU binding. Protease subunit of a proteasome-like degradation complex believed to be a general protein degrading machinery. The sequence is that of ATP-dependent protease subunit HslV from Sinorhizobium medicae (strain WSM419) (Ensifer medicae).